The sequence spans 457 residues: Exodeoxyribonuclease 7 large subunit (457 aa).

Belongs to the XseA family. In terms of assembly, heterooligomer composed of large and small subunits.

It localises to the cytoplasm. The enzyme catalyses Exonucleolytic cleavage in either 5'- to 3'- or 3'- to 5'-direction to yield nucleoside 5'-phosphates.. Functionally, bidirectionally degrades single-stranded DNA into large acid-insoluble oligonucleotides, which are then degraded further into small acid-soluble oligonucleotides. In Enterobacter sp. (strain 638), this protein is Exodeoxyribonuclease 7 large subunit.